A 502-amino-acid polypeptide reads, in one-letter code: Probable glycine dehydrogenase (decarboxylating) subunit 2 (502 aa).

Residue lysine 273 is modified to N6-(pyridoxal phosphate)lysine.

Belongs to the GcvP family. C-terminal subunit subfamily. The glycine cleavage system is composed of four proteins: P, T, L and H. In this organism, the P 'protein' is a heterodimer of two subunits. Pyridoxal 5'-phosphate serves as cofactor.

It catalyses the reaction N(6)-[(R)-lipoyl]-L-lysyl-[glycine-cleavage complex H protein] + glycine + H(+) = N(6)-[(R)-S(8)-aminomethyldihydrolipoyl]-L-lysyl-[glycine-cleavage complex H protein] + CO2. Its function is as follows. The glycine cleavage system catalyzes the degradation of glycine. The P protein binds the alpha-amino group of glycine through its pyridoxal phosphate cofactor; CO(2) is released and the remaining methylamine moiety is then transferred to the lipoamide cofactor of the H protein. The chain is Probable glycine dehydrogenase (decarboxylating) subunit 2 from Staphylococcus epidermidis (strain ATCC 35984 / DSM 28319 / BCRC 17069 / CCUG 31568 / BM 3577 / RP62A).